Reading from the N-terminus, the 374-residue chain is Queuine tRNA-ribosyltransferase (374 aa).

Residue aspartate 91 is the Proton acceptor of the active site. Residues 91–95 (DSGGY), aspartate 145, glutamine 189, and glycine 216 each bind substrate. Residues 247–253 (GVGTVPD) form an RNA binding region. The Nucleophile role is filled by aspartate 266. The tract at residues 271-275 (TRNAR) is RNA binding; important for wobble base 34 recognition. Cysteine 304, cysteine 306, cysteine 309, and histidine 335 together coordinate Zn(2+).

Belongs to the queuine tRNA-ribosyltransferase family. As to quaternary structure, homodimer. Within each dimer, one monomer is responsible for RNA recognition and catalysis, while the other monomer binds to the replacement base PreQ1. Zn(2+) serves as cofactor.

It carries out the reaction 7-aminomethyl-7-carbaguanine + guanosine(34) in tRNA = 7-aminomethyl-7-carbaguanosine(34) in tRNA + guanine. It functions in the pathway tRNA modification; tRNA-queuosine biosynthesis. Its function is as follows. Catalyzes the base-exchange of a guanine (G) residue with the queuine precursor 7-aminomethyl-7-deazaguanine (PreQ1) at position 34 (anticodon wobble position) in tRNAs with GU(N) anticodons (tRNA-Asp, -Asn, -His and -Tyr). Catalysis occurs through a double-displacement mechanism. The nucleophile active site attacks the C1' of nucleotide 34 to detach the guanine base from the RNA, forming a covalent enzyme-RNA intermediate. The proton acceptor active site deprotonates the incoming PreQ1, allowing a nucleophilic attack on the C1' of the ribose to form the product. After dissociation, two additional enzymatic reactions on the tRNA convert PreQ1 to queuine (Q), resulting in the hypermodified nucleoside queuosine (7-(((4,5-cis-dihydroxy-2-cyclopenten-1-yl)amino)methyl)-7-deazaguanosine). This Leptospira borgpetersenii serovar Hardjo-bovis (strain JB197) protein is Queuine tRNA-ribosyltransferase.